Here is a 298-residue protein sequence, read N- to C-terminus: MSSHIAKSESKTSLLKAAAASGGSRAPRHSSARDPGLRGRRLPGPCPDSPATCGDPSSRRPLCRPVPRDEGARGSRRGLPQAHCRPRETLPPARGRDGEERGLAPALSLRGSLRSRGRGDPAPAGTPEADPFLHQLRPMLSSAFGQDRSLRPEEIEELREAFREFDKDKDGYINCRDLGNCMRTMGYMPTEMELIELSQQINMNLGGHVDFDDFVELMGPKLLAETADMIGVKELRDAFREFDTNGDGEISTSELREAMRKLLGHQVGHRDIEEIIRDVDLNGDGRVDFEEFVRMMSR.

Basic and acidic residues predominate over residues 1 to 10 (MSSHIAKSES). Residues 1–131 (MSSHIAKSES…APAGTPEADP (131 aa)) are disordered. The N-myristoyl glycine moiety is linked to residue serine 2. A lipid anchor (S-palmitoyl cysteine) is attached at histidine 4. Residues 11-25 (KTSLLKAAAASGGSR) show a composition bias toward low complexity. EF-hand domains lie at 153 to 188 (EEIEELREAFREFDKDKDGYINCRDLGNCMRTMGYM), 207 to 224 (GHVDFDDFVELMGPKLLA), 230 to 265 (IGVKELRDAFREFDTNGDGEISTSELREAMRKLLGH), and 267 to 298 (VGHRDIEEIIRDVDLNGDGRVDFEEFVRMMSR). The Ca(2+) site is built by aspartate 166, aspartate 168, aspartate 170, tyrosine 172, and aspartate 177. Aspartate 243, asparagine 245, aspartate 247, and glutamate 249 together coordinate Ca(2+). Serine 251 carries the post-translational modification Phosphoserine. Ca(2+) is bound by residues glutamate 254, aspartate 280, asparagine 282, aspartate 284, arginine 286, and glutamate 291.

Interacts with ITPR1, ITPR2 and ITPR3. The strength of this interaction inversely correlates with calcium concentration. Interacts with CACNA1A (via C-terminal CDB motif) in the pre- and postsynaptic membranes. Interacts with CACNA1C. Interacts with CACNA1D. Interacts (via EF-hands 1 and 2) at microtubules with MAP1LC3B. Interacts (via EF-hands 1 and 2) with NSMF (via the central NLS-containing motif region), the interaction occurs in a calcium dependent manner after synaptic NMDA receptor stimulation and prevents nuclear import of NSMF. Interacts with MYO1C and TRPC5. Interacts with SPACA9. In terms of processing, phosphorylated. The phosphorylation regulates the activity. In terms of tissue distribution, somatodendritic compartment of neurons. Restricted expression in retina to a subpopulation of amacrine, bipolar, and ganglion cells. According to PubMed:11906216, expression is heterogeneous within brain regions and their major cell types and does not match with those of marker proteins for characterized neuronal subpopulations. Isoform 2: Minor isoform expressed in the brain, in the granule cell layer of the cerebellum, at low level. Not developmentally regulated. Isoform 3: Minor isoform expressed in the brain, in the granule cell layer. of the cerebellum, at low level. Not developmentally regulated.

It localises to the cytoplasm. The protein localises to the cytoskeleton. In terms of biological role, modulates calcium-dependent activity of inositol 1,4,5-triphosphate receptors (ITPRs). Inhibits agonist-induced intracellular calcium signaling. Enhances inactivation and does not support calcium-dependent facilitation of voltage-dependent P/Q-type calcium channels. Causes calcium-dependent facilitation and inhibits inactivation of L-type calcium channels by binding to the same sites as calmodulin in the C-terminal domain of CACNA1C, but has an opposite effect on channel function. Suppresses the calcium-dependent inactivation of CACNA1D. Inhibits TRPC5 channels. Prevents NMDA receptor-induced cellular degeneration. Required for the normal transfer of light signals through the retina. This Rattus norvegicus (Rat) protein is Calcium-binding protein 1 (Cabp1).